The following is a 306-amino-acid chain: Acetyl-coenzyme A carboxylase carboxyl transferase subunit beta (306 aa).

Residues 27–296 (LWHKCPSCEA…PEFVAAPVEP (270 aa)) form the CoA carboxyltransferase N-terminal domain. Zn(2+)-binding residues include Cys31, Cys34, Cys50, and Cys53. Residues 31-53 (CPSCEAVLYRPELEKTLDVCPKC) form a C4-type zinc finger.

It belongs to the AccD/PCCB family. In terms of assembly, acetyl-CoA carboxylase is a heterohexamer composed of biotin carboxyl carrier protein (AccB), biotin carboxylase (AccC) and two subunits each of ACCase subunit alpha (AccA) and ACCase subunit beta (AccD). The cofactor is Zn(2+).

It is found in the cytoplasm. The catalysed reaction is N(6)-carboxybiotinyl-L-lysyl-[protein] + acetyl-CoA = N(6)-biotinyl-L-lysyl-[protein] + malonyl-CoA. It functions in the pathway lipid metabolism; malonyl-CoA biosynthesis; malonyl-CoA from acetyl-CoA: step 1/1. Its function is as follows. Component of the acetyl coenzyme A carboxylase (ACC) complex. Biotin carboxylase (BC) catalyzes the carboxylation of biotin on its carrier protein (BCCP) and then the CO(2) group is transferred by the transcarboxylase to acetyl-CoA to form malonyl-CoA. This is Acetyl-coenzyme A carboxylase carboxyl transferase subunit beta from Pseudomonas fluorescens (strain ATCC BAA-477 / NRRL B-23932 / Pf-5).